The sequence spans 183 residues: ATP synthase subunit b, chloroplastic (183 aa).

Residues 27 to 49 form a helical membrane-spanning segment; it reads LATNLINLTVVVGVLIFFGKGVL.

This sequence belongs to the ATPase B chain family. In terms of assembly, F-type ATPases have 2 components, F(1) - the catalytic core - and F(0) - the membrane proton channel. F(1) has five subunits: alpha(3), beta(3), gamma(1), delta(1), epsilon(1). F(0) has four main subunits: a(1), b(1), b'(1) and c(10-14). The alpha and beta chains form an alternating ring which encloses part of the gamma chain. F(1) is attached to F(0) by a central stalk formed by the gamma and epsilon chains, while a peripheral stalk is formed by the delta, b and b' chains.

The protein resides in the plastid. It localises to the chloroplast thylakoid membrane. Functionally, f(1)F(0) ATP synthase produces ATP from ADP in the presence of a proton or sodium gradient. F-type ATPases consist of two structural domains, F(1) containing the extramembraneous catalytic core and F(0) containing the membrane proton channel, linked together by a central stalk and a peripheral stalk. During catalysis, ATP synthesis in the catalytic domain of F(1) is coupled via a rotary mechanism of the central stalk subunits to proton translocation. Component of the F(0) channel, it forms part of the peripheral stalk, linking F(1) to F(0). This is ATP synthase subunit b, chloroplastic from Brachypodium distachyon (Purple false brome).